The chain runs to 437 residues: Epsilon-sarcoglycan (437 aa).

Topologically, residues 1 to 317 are extracellular; it reads MQLPRWWELG…LKSRDYYTDF (317 aa). N200 is a glycosylation site (N-linked (GlcNAc...) asparagine). Residues 318–338 traverse the membrane as a helical segment; sequence LITLAVPSAVALVLFLILAYI. The Cytoplasmic segment spans residues 339–437; it reads MCCRREGVEK…QQQTTGKWYP (99 aa).

The protein belongs to the sarcoglycan alpha/epsilon family. In terms of processing, N-glycosylated. Ubiquitinated, leading to its degradation by the proteasome.

It is found in the cell membrane. It localises to the sarcolemma. Its subcellular location is the cytoplasm. The protein resides in the cytoskeleton. The protein localises to the cell projection. It is found in the dendrite. It localises to the golgi apparatus. Component of the sarcoglycan complex, a subcomplex of the dystrophin-glycoprotein complex which forms a link between the F-actin cytoskeleton and the extracellular matrix. The polypeptide is Epsilon-sarcoglycan (Pongo abelii (Sumatran orangutan)).